The chain runs to 379 residues: Queuine tRNA-ribosyltransferase (379 aa).

The Proton acceptor role is filled by aspartate 94. Substrate contacts are provided by residues 94–98 (DSGGF), aspartate 148, glutamine 191, and glycine 218. The interval 249-255 (GVGSPDS) is RNA binding. Residue aspartate 268 is the Nucleophile of the active site. An RNA binding; important for wobble base 34 recognition region spans residues 273 to 277 (TRIAR). Cysteine 306, cysteine 308, cysteine 311, and histidine 337 together coordinate Zn(2+).

Belongs to the queuine tRNA-ribosyltransferase family. In terms of assembly, homodimer. Within each dimer, one monomer is responsible for RNA recognition and catalysis, while the other monomer binds to the replacement base PreQ1. Requires Zn(2+) as cofactor.

The catalysed reaction is 7-aminomethyl-7-carbaguanine + guanosine(34) in tRNA = 7-aminomethyl-7-carbaguanosine(34) in tRNA + guanine. The protein operates within tRNA modification; tRNA-queuosine biosynthesis. In terms of biological role, catalyzes the base-exchange of a guanine (G) residue with the queuine precursor 7-aminomethyl-7-deazaguanine (PreQ1) at position 34 (anticodon wobble position) in tRNAs with GU(N) anticodons (tRNA-Asp, -Asn, -His and -Tyr). Catalysis occurs through a double-displacement mechanism. The nucleophile active site attacks the C1' of nucleotide 34 to detach the guanine base from the RNA, forming a covalent enzyme-RNA intermediate. The proton acceptor active site deprotonates the incoming PreQ1, allowing a nucleophilic attack on the C1' of the ribose to form the product. After dissociation, two additional enzymatic reactions on the tRNA convert PreQ1 to queuine (Q), resulting in the hypermodified nucleoside queuosine (7-(((4,5-cis-dihydroxy-2-cyclopenten-1-yl)amino)methyl)-7-deazaguanosine). The sequence is that of Queuine tRNA-ribosyltransferase from Listeria monocytogenes serovar 1/2a (strain ATCC BAA-679 / EGD-e).